Here is a 118-residue protein sequence, read N- to C-terminus: Large ribosomal subunit protein uL18 (118 aa).

Belongs to the universal ribosomal protein uL18 family. In terms of assembly, part of the 50S ribosomal subunit; part of the 5S rRNA/L5/L18/L25 subcomplex. Contacts the 5S and 23S rRNAs.

This is one of the proteins that bind and probably mediate the attachment of the 5S RNA into the large ribosomal subunit, where it forms part of the central protuberance. This chain is Large ribosomal subunit protein uL18, found in Rickettsia prowazekii (strain Madrid E).